Consider the following 273-residue polypeptide: Cysteine protease S273R (273 aa).

Catalysis depends on residues His168 and Asn187. Position 226 (Gln226) interacts with substrate. The Nucleophile role is filled by Cys232.

The protein belongs to the peptidase C63 family.

Its subcellular location is the host cytoplasm. It is found in the virion. Cysteine protease that plays several role during infection including processing of the structural polyprotein or inhibition of the host immune response. Catalyzes the maturation of the pp220 and pp62 polyprotein precursors into core-shell proteins. Plays a role in the disruption of host pyroptosis via specific cleavage of gasdermin D/GSDMD. In addition, strongly decreases the host cGAS-STING signaling by targeting IKBKE via its enzymatic activity. Also impairs host FOXJ1-mediated antiviral effect via degradation of FOXJ1. This African swine fever virus (isolate Tick/Malawi/Lil 20-1/1983) (ASFV) protein is Cysteine protease S273R.